Reading from the N-terminus, the 284-residue chain is L-ribulose-5-phosphate 3-epimerase UlaE (284 aa).

It belongs to the L-ribulose-5-phosphate 3-epimerase family.

The enzyme catalyses L-ribulose 5-phosphate = L-xylulose 5-phosphate. It functions in the pathway cofactor degradation; L-ascorbate degradation; D-xylulose 5-phosphate from L-ascorbate: step 3/4. Functionally, catalyzes the isomerization of L-xylulose-5-phosphate to L-ribulose-5-phosphate. Is involved in the anaerobic L-ascorbate utilization. The polypeptide is L-ribulose-5-phosphate 3-epimerase UlaE (Shigella sonnei (strain Ss046)).